The primary structure comprises 418 residues: Glutamyl-tRNA reductase (418 aa).

Residues 49–52 (TCNR), Ser109, 114–116 (EPQ), and Gln120 contribute to the substrate site. Cys50 (nucleophile) is an active-site residue. 189-194 (GAGETI) contributes to the NADP(+) binding site.

The protein belongs to the glutamyl-tRNA reductase family. Homodimer.

It catalyses the reaction (S)-4-amino-5-oxopentanoate + tRNA(Glu) + NADP(+) = L-glutamyl-tRNA(Glu) + NADPH + H(+). It functions in the pathway porphyrin-containing compound metabolism; protoporphyrin-IX biosynthesis; 5-aminolevulinate from L-glutamyl-tRNA(Glu): step 1/2. In terms of biological role, catalyzes the NADPH-dependent reduction of glutamyl-tRNA(Glu) to glutamate 1-semialdehyde (GSA). The sequence is that of Glutamyl-tRNA reductase from Escherichia coli O45:K1 (strain S88 / ExPEC).